The following is a 284-amino-acid chain: Diaminopimelate epimerase (284 aa).

N21, Q54, and N74 together coordinate substrate. C83 acts as the Proton donor in catalysis. Residues 84–85 (GN), N167, N200, and 218–219 (ER) each bind substrate. C227 functions as the Proton acceptor in the catalytic mechanism. 228 to 229 (GS) provides a ligand contact to substrate.

The protein belongs to the diaminopimelate epimerase family. In terms of assembly, homodimer.

It localises to the cytoplasm. The catalysed reaction is (2S,6S)-2,6-diaminopimelate = meso-2,6-diaminopimelate. It functions in the pathway amino-acid biosynthesis; L-lysine biosynthesis via DAP pathway; DL-2,6-diaminopimelate from LL-2,6-diaminopimelate: step 1/1. In terms of biological role, catalyzes the stereoinversion of LL-2,6-diaminopimelate (L,L-DAP) to meso-diaminopimelate (meso-DAP), a precursor of L-lysine and an essential component of the bacterial peptidoglycan. The sequence is that of Diaminopimelate epimerase from Buchnera aphidicola subsp. Acyrthosiphon pisum (strain APS) (Acyrthosiphon pisum symbiotic bacterium).